A 313-amino-acid chain; its full sequence is MGKGKNKMHEPKNGRPQRGANGHSSRQNHRRMEMKYDNSEKMKFPVKLAMWDFDHCDPKRCSGKKLERLGLIKSLRVGQKFQGIVVSPNGKGVVCPDDLEIVEQHGASVVECSWARLEEVPFNKIGGKHERLLPYLVAANQVNYGRPWRLNCVEALAACFAIVGRMDWASELLSHFSWGMGFLELNKELLEIYQQCTDCDSVKRAEEEWLQKLEKETQERKSRAKEEDIWMMGNINRRGNGSQSDTSESEENSEQSDLEGNNQCIEYDSLGNAIRIDNMKSREAQSEESEDEESGSKENGEPLSYDPLGNLIR.

Residues 1–30 (MGKGKNKMHEPKNGRPQRGANGHSSRQNHR) form a disordered region. S-adenosyl-L-methionine contacts are provided by Ser62, Val110, Leu133, and Trp148. The span at 215 to 228 (KETQERKSRAKEED) shows a compositional bias: basic and acidic residues. Positions 215 to 313 (KETQERKSRA…SYDPLGNLIR (99 aa)) are disordered. Positions 237 to 246 (RRGNGSQSDT) are enriched in polar residues. Over residues 247–257 (SESEENSEQSD) the composition is skewed to acidic residues. Phosphoserine is present on residues Ser286 and Ser289.

This sequence belongs to the TDD superfamily. TSR3 family.

It is found in the cytoplasm. The protein resides in the nucleus. The enzyme catalyses an N(1)-methylpseudouridine in rRNA + S-adenosyl-L-methionine = N(1)-methyl-N(3)-[(3S)-3-amino-3-carboxypropyl]pseudouridine in rRNA + S-methyl-5'-thioadenosine + H(+). It carries out the reaction N(1)-methylpseudouridine(1191) in yeast 18S rRNA + S-adenosyl-L-methionine = N(1)-methyl-N(3)-[(3S)-3-amino-3-carboxypropyl]pseudouridine(1191) in yeast 18S rRNA + S-methyl-5'-thioadenosine + H(+). Its function is as follows. Aminocarboxypropyltransferase that catalyzes the aminocarboxypropyl transfer on pseudouridine at position 1191 (Psi1191) in 18S rRNA. It constitutes the last step in biosynthesis of the hypermodified N1-methyl-N3-(3-amino-3-carboxypropyl) pseudouridine (m1acp3-Psi) conserved in eukaryotic 18S rRNA. Required for processing 35S pre-rRNA at site D. This chain is 18S rRNA aminocarboxypropyltransferase, found in Saccharomyces cerevisiae (strain ATCC 204508 / S288c) (Baker's yeast).